Here is a 432-residue protein sequence, read N- to C-terminus: 3-phosphoshikimate 1-carboxyvinyltransferase (432 aa).

Lys22, Ser23, and Arg27 together coordinate 3-phosphoshikimate. Lys22 serves as a coordination point for phosphoenolpyruvate. 2 residues coordinate phosphoenolpyruvate: Gly96 and Arg127. Positions 173, 174, 175, 201, 316, 339, and 343 each coordinate 3-phosphoshikimate. Residue Gln175 participates in phosphoenolpyruvate binding. Asp316 acts as the Proton acceptor in catalysis. Residues Arg347, Arg391, and Lys416 each coordinate phosphoenolpyruvate.

The protein belongs to the EPSP synthase family. As to quaternary structure, monomer.

Its subcellular location is the cytoplasm. It catalyses the reaction 3-phosphoshikimate + phosphoenolpyruvate = 5-O-(1-carboxyvinyl)-3-phosphoshikimate + phosphate. Its pathway is metabolic intermediate biosynthesis; chorismate biosynthesis; chorismate from D-erythrose 4-phosphate and phosphoenolpyruvate: step 6/7. In terms of biological role, catalyzes the transfer of the enolpyruvyl moiety of phosphoenolpyruvate (PEP) to the 5-hydroxyl of shikimate-3-phosphate (S3P) to produce enolpyruvyl shikimate-3-phosphate and inorganic phosphate. This is 3-phosphoshikimate 1-carboxyvinyltransferase from Actinobacillus pleuropneumoniae serotype 7 (strain AP76).